Consider the following 197-residue polypeptide: Probable inosine/xanthosine triphosphatase (197 aa).

Residue 9–14 coordinates substrate; the sequence is TSNPIK. 2 residues coordinate Mg(2+): D36 and D65.

It belongs to the YjjX NTPase family. As to quaternary structure, homodimer. The cofactor is Mg(2+). Mn(2+) serves as cofactor.

The enzyme catalyses XTP + H2O = XDP + phosphate + H(+). It carries out the reaction ITP + H2O = IDP + phosphate + H(+). In terms of biological role, phosphatase that hydrolyzes non-canonical purine nucleotides such as XTP and ITP to their respective diphosphate derivatives. Probably excludes non-canonical purines from DNA/RNA precursor pool, thus preventing their incorporation into DNA/RNA and avoiding chromosomal lesions. The sequence is that of Probable inosine/xanthosine triphosphatase from Aeropyrum pernix (strain ATCC 700893 / DSM 11879 / JCM 9820 / NBRC 100138 / K1).